The sequence spans 231 residues: Heptaprenylglyceryl phosphate synthase (231 aa).

Residue lysine 12 coordinates sn-glycerol 1-phosphate. Aspartate 14 and threonine 40 together coordinate Mg(2+). Sn-glycerol 1-phosphate-binding positions include 159–164, glycine 189, and 209–210; these read YMEYSG and GN.

It belongs to the GGGP/HepGP synthase family. Group I subfamily. As to quaternary structure, homodimer. Mg(2+) is required as a cofactor.

The catalysed reaction is sn-glycerol 1-phosphate + all-trans-heptaprenyl diphosphate = 3-heptaprenyl-sn-glycero-1-phosphate + diphosphate. The protein operates within membrane lipid metabolism; glycerophospholipid metabolism. Prenyltransferase that catalyzes in vivo the transfer of the heptaprenyl moiety of heptaprenyl pyrophosphate (HepPP; 35 carbon atoms) to the C3 hydroxyl of sn-glycerol-1-phosphate (G1P), producing heptaprenylglyceryl phosphate (HepGP). This reaction is an ether-bond-formation step in the biosynthesis of archaea-type G1P-based membrane lipids found in Bacillales. This chain is Heptaprenylglyceryl phosphate synthase, found in Brevibacillus brevis (strain 47 / JCM 6285 / NBRC 100599).